We begin with the raw amino-acid sequence, 325 residues long: Ribosomal RNA small subunit methyltransferase H (325 aa).

S-adenosyl-L-methionine contacts are provided by residues 39–41 (GGH), aspartate 59, phenylalanine 90, aspartate 108, and glutamine 115.

It belongs to the methyltransferase superfamily. RsmH family.

Its subcellular location is the cytoplasm. It carries out the reaction cytidine(1402) in 16S rRNA + S-adenosyl-L-methionine = N(4)-methylcytidine(1402) in 16S rRNA + S-adenosyl-L-homocysteine + H(+). Its function is as follows. Specifically methylates the N4 position of cytidine in position 1402 (C1402) of 16S rRNA. In Leptothrix cholodnii (strain ATCC 51168 / LMG 8142 / SP-6) (Leptothrix discophora (strain SP-6)), this protein is Ribosomal RNA small subunit methyltransferase H.